Here is a 182-residue protein sequence, read N- to C-terminus: Phospholipase A2 inhibitor gamma subunit A2 (182 aa).

Cystine bridges form between cysteine 3–cysteine 27, cysteine 6–cysteine 13, cysteine 20–cysteine 48, cysteine 54–cysteine 75, cysteine 76–cysteine 81, cysteine 99–cysteine 124, cysteine 117–cysteine 146, and cysteine 150–cysteine 172. Asparagine 157 carries an N-linked (GlcNAc...) asparagine glycan.

The protein belongs to the CNF-like-inhibitor family. Heterodimer of subunit A and subunit B.

The protein localises to the secreted. Its function is as follows. Phospholipase A2 (PA2) inhibitor. Inhibits the enzymatic activity of PA2 of Deinagkistrodon acutus. Also shows a wide anti-hemorrhage activities to D.acutus, Naja atra and Agkistrodon halys venom. The native protein is more potent than the recombinant one. The chain is Phospholipase A2 inhibitor gamma subunit A2 from Trimerodytes annularis (Red-bellied annulate keelback).